The following is a 21-amino-acid chain: Large ribosomal subunit protein uL10 (21 aa).

The protein belongs to the universal ribosomal protein uL10 family. As to quaternary structure, part of the ribosomal stalk of the 50S ribosomal subunit. The N-terminus interacts with L11 and the large rRNA to form the base of the stalk. The C-terminus forms an elongated spine to which L12 dimers bind in a sequential fashion forming a multimeric L10(L12)X complex.

Its function is as follows. Forms part of the ribosomal stalk, playing a central role in the interaction of the ribosome with GTP-bound translation factors. In Proteus vulgaris, this protein is Large ribosomal subunit protein uL10 (rplJ).